The primary structure comprises 310 residues: p-hydroxybenzoic acid efflux pump subunit AaeA (310 aa).

A helical transmembrane segment spans residues 12–32 (AITVVLVILAFIAIFNAWVYY).

The protein belongs to the membrane fusion protein (MFP) (TC 8.A.1) family.

It is found in the cell inner membrane. Its function is as follows. Forms an efflux pump with AaeB. The chain is p-hydroxybenzoic acid efflux pump subunit AaeA from Escherichia coli O139:H28 (strain E24377A / ETEC).